The primary structure comprises 573 residues: Squalene monooxygenase (573 aa).

Over 1-19 (MWTFLGIATFTYFYKKCGD) the chain is Cytoplasmic. Residues 1–99 (MWTFLGIATF…EQLESKRRRK (99 aa)) are interaction with MARCHF6. Residues 20-40 (VTLANKELLLCVLVFLSLGLV) lie within the membrane without spanning it. Topologically, residues 41–573 (LSYRCRHRNG…IYSEMKYLVH (533 aa)) are cytoplasmic. The interval 61–72 (QFAAFSDILSAL) is required for degradation in response to high membrane cholesterol levels. A sufficient for catalytic activity region spans residues 100–573 (EVNLSETTLT…IYSEMKYLVH (474 aa)). Residues 132–133 (VL), 152–153 (ER), Arg-160, Arg-233, Val-249, Asp-407, and Met-420 each bind FAD. Residues 515 to 573 (PLLLIRHFFSVAVYATYFCFKSEPWATKPRALFSSGAILYKACSIIFPLIYSEMKYLVH) form a hydrophobic; mediates interaction with membranes region.

It belongs to the squalene monooxygenase family. As to quaternary structure, interacts (via N-terminal domain) with MARCHF6. Interacts with SMIM22; this interaction modulates lipid droplet formation. Requires FAD as cofactor. Ubiquitinated by MARCHF6 in response to high cholesterol levels in intracellular membranes, leading to proteasomal degradation. Detected in lever (at protein level).

Its subcellular location is the microsome membrane. It is found in the endoplasmic reticulum membrane. It catalyses the reaction squalene + reduced [NADPH--hemoprotein reductase] + O2 = (S)-2,3-epoxysqualene + oxidized [NADPH--hemoprotein reductase] + H2O + H(+). The protein operates within terpene metabolism; lanosterol biosynthesis; lanosterol from farnesyl diphosphate: step 2/3. Its activity is regulated as follows. Inhibited by NB-598 ((E)N-ethyl-N-(6,6-dimethyl-2-hepten-4-ynyl)-3-[(3,3'-bi-thiophen-5-yl)methoxy]benzene-methanamine). Contrary to fungal enzymes, the mammalian enzyme is only slightly inhibited by terbinafine. Its function is as follows. Catalyzes the stereospecific oxidation of squalene to (S)-2,3-epoxysqualene, and is considered to be a rate-limiting enzyme in steroid biosynthesis. This Rattus norvegicus (Rat) protein is Squalene monooxygenase (Sqle).